The following is a 377-amino-acid chain: MTQSQQVSADPAPLRTPADYQAQLDEKRERLCGLFADFTLPALEVHASPAEHYRMRAEFRIWHDGDDLYHCMYAPATKEIIRVDQFPTASRLINQLMPVLLEGLRPHPVLRRKLFQIDYLSTQSGQICVSLLYHRKLESEWQQAAEALQADLRAKGFELQLIGRAHKQKICLGEEFVIERLTVQGRQLVYKQVENSFTQPNAAINEQMLGWALDVTKGSEGDLLELYCGNGNFSIALAQNFRKVLATEIAKPSVDSAQFNIAANGVDNLIILRMSAEEFTMAMRGEREFNRLKGVDLGAYQCNTIFVDPPRAGLDDATVKLVQDYDNILYISCNPETLQANMAVLGETHEIARFALFDQFPWTHHMEAGVYLKRKAG.

Gln-199, Tyr-227, Asn-232, Glu-248, and Asp-308 together coordinate S-adenosyl-L-methionine. The Nucleophile role is filled by Cys-333. Glu-367 acts as the Proton acceptor in catalysis.

Belongs to the class I-like SAM-binding methyltransferase superfamily. RNA M5U methyltransferase family. TrmA subfamily.

The catalysed reaction is uridine(54) in tRNA + S-adenosyl-L-methionine = 5-methyluridine(54) in tRNA + S-adenosyl-L-homocysteine + H(+). The enzyme catalyses uridine(341) in tmRNA + S-adenosyl-L-methionine = 5-methyluridine(341) in tmRNA + S-adenosyl-L-homocysteine + H(+). Functionally, dual-specificity methyltransferase that catalyzes the formation of 5-methyluridine at position 54 (m5U54) in all tRNAs, and that of position 341 (m5U341) in tmRNA (transfer-mRNA). The protein is tRNA/tmRNA (uracil-C(5))-methyltransferase of Aeromonas hydrophila subsp. hydrophila (strain ATCC 7966 / DSM 30187 / BCRC 13018 / CCUG 14551 / JCM 1027 / KCTC 2358 / NCIMB 9240 / NCTC 8049).